The chain runs to 276 residues: 2-dehydro-3-deoxyphosphooctonate aldolase (276 aa).

Belongs to the KdsA family.

The protein resides in the cytoplasm. It carries out the reaction D-arabinose 5-phosphate + phosphoenolpyruvate + H2O = 3-deoxy-alpha-D-manno-2-octulosonate-8-phosphate + phosphate. Its pathway is carbohydrate biosynthesis; 3-deoxy-D-manno-octulosonate biosynthesis; 3-deoxy-D-manno-octulosonate from D-ribulose 5-phosphate: step 2/3. The protein operates within bacterial outer membrane biogenesis; lipopolysaccharide biosynthesis. This is 2-dehydro-3-deoxyphosphooctonate aldolase from Helicobacter pylori (strain Shi470).